The primary structure comprises 188 residues: Defensin-like protein 99 (188 aa).

Positions 1-28 (MGSLKLSTVVVTALVVCLSILLISPTEA) are cleaved as a signal peptide. Disulfide bonds link C37/C95, C45/C77, C58/C92, C62/C94, C123/C178, C137/C175, and C141/C177.

This sequence belongs to the DEFL family.

The protein localises to the secreted. In Arabidopsis thaliana (Mouse-ear cress), this protein is Defensin-like protein 99.